Reading from the N-terminus, the 156-residue chain is ATP synthase subunit b (156 aa).

Residues 7–26 (LIGQLIAFALFVAFCMKYVW) traverse the membrane as a helical segment.

It belongs to the ATPase B chain family. In terms of assembly, F-type ATPases have 2 components, F(1) - the catalytic core - and F(0) - the membrane proton channel. F(1) has five subunits: alpha(3), beta(3), gamma(1), delta(1), epsilon(1). F(0) has three main subunits: a(1), b(2) and c(10-14). The alpha and beta chains form an alternating ring which encloses part of the gamma chain. F(1) is attached to F(0) by a central stalk formed by the gamma and epsilon chains, while a peripheral stalk is formed by the delta and b chains.

It localises to the cell inner membrane. Its function is as follows. F(1)F(0) ATP synthase produces ATP from ADP in the presence of a proton or sodium gradient. F-type ATPases consist of two structural domains, F(1) containing the extramembraneous catalytic core and F(0) containing the membrane proton channel, linked together by a central stalk and a peripheral stalk. During catalysis, ATP synthesis in the catalytic domain of F(1) is coupled via a rotary mechanism of the central stalk subunits to proton translocation. In terms of biological role, component of the F(0) channel, it forms part of the peripheral stalk, linking F(1) to F(0). This is ATP synthase subunit b from Haemophilus ducreyi (strain 35000HP / ATCC 700724).